A 278-amino-acid chain; its full sequence is Heat stress transcription factor C-2b (278 aa).

Residues 105 to 114 (AAGGGGGGGG) are compositionally biased toward gly residues. Residues 105–132 (AAGGGGGGGGGKRRDASADGGGGGGDED) are disordered. A hydrophobic repeat HR-A/B region spans residues 143–179 (LKQEQRTIDDRVAAMWRRVQETERRPKQMLAFLLKVV). The short motif at 219–222 (KRAR) is the Nuclear localization signal element.

Belongs to the HSF family. Class C subfamily. As to quaternary structure, homotrimer. Post-translationally, exhibits temperature-dependent phosphorylation.

The protein resides in the nucleus. In terms of biological role, transcriptional regulator that specifically binds DNA of heat shock promoter elements (HSE). This chain is Heat stress transcription factor C-2b (HSFC2B), found in Oryza sativa subsp. japonica (Rice).